The following is a 426-amino-acid chain: Glutamate-1-semialdehyde 2,1-aminomutase (426 aa).

Residue lysine 265 is modified to N6-(pyridoxal phosphate)lysine.

The protein belongs to the class-III pyridoxal-phosphate-dependent aminotransferase family. HemL subfamily. Homodimer. The cofactor is pyridoxal 5'-phosphate.

Its subcellular location is the cytoplasm. It carries out the reaction (S)-4-amino-5-oxopentanoate = 5-aminolevulinate. It functions in the pathway porphyrin-containing compound metabolism; protoporphyrin-IX biosynthesis; 5-aminolevulinate from L-glutamyl-tRNA(Glu): step 2/2. This is Glutamate-1-semialdehyde 2,1-aminomutase from Cronobacter sakazakii (strain ATCC BAA-894) (Enterobacter sakazakii).